The following is a 937-amino-acid chain: Valine--tRNA ligase (937 aa).

Residues 44–54 carry the 'HIGH' region motif; that stretch reads PNVTGTLHMGH. The short motif at 548-552 is the 'KMSKS' region element; that stretch reads KMSKS. An ATP-binding site is contributed by Lys-551. The stretch at 874–937 forms a coiled coil; sequence AAETARLTKE…KLKAQLLKLA (64 aa).

The protein belongs to the class-I aminoacyl-tRNA synthetase family. ValS type 1 subfamily. Monomer.

The protein localises to the cytoplasm. The catalysed reaction is tRNA(Val) + L-valine + ATP = L-valyl-tRNA(Val) + AMP + diphosphate. In terms of biological role, catalyzes the attachment of valine to tRNA(Val). As ValRS can inadvertently accommodate and process structurally similar amino acids such as threonine, to avoid such errors, it has a 'posttransfer' editing activity that hydrolyzes mischarged Thr-tRNA(Val) in a tRNA-dependent manner. The polypeptide is Valine--tRNA ligase (Laribacter hongkongensis (strain HLHK9)).